A 572-amino-acid chain; its full sequence is Proline--tRNA ligase (572 aa).

It belongs to the class-II aminoacyl-tRNA synthetase family. ProS type 1 subfamily. Homodimer.

Its subcellular location is the cytoplasm. The catalysed reaction is tRNA(Pro) + L-proline + ATP = L-prolyl-tRNA(Pro) + AMP + diphosphate. Functionally, catalyzes the attachment of proline to tRNA(Pro) in a two-step reaction: proline is first activated by ATP to form Pro-AMP and then transferred to the acceptor end of tRNA(Pro). As ProRS can inadvertently accommodate and process non-cognate amino acids such as alanine and cysteine, to avoid such errors it has two additional distinct editing activities against alanine. One activity is designated as 'pretransfer' editing and involves the tRNA(Pro)-independent hydrolysis of activated Ala-AMP. The other activity is designated 'posttransfer' editing and involves deacylation of mischarged Ala-tRNA(Pro). The misacylated Cys-tRNA(Pro) is not edited by ProRS. This chain is Proline--tRNA ligase, found in Salmonella newport (strain SL254).